Consider the following 344-residue polypeptide: KRR1 small subunit processome component homolog (344 aa).

The KH domain occupies aspartate 125–asparagine 193. Residues asparagine 232–lysine 245 are compositionally biased toward basic residues. Disordered regions lie at residues asparagine 232 to valine 260 and glutamine 273 to aspartate 326. Residues phenylalanine 270 to glutamine 295 are a coiled coil. 2 stretches are compositionally biased toward basic and acidic residues: residues glycine 283–aspartate 302 and arginine 315–aspartate 326.

It belongs to the KRR1 family. As to quaternary structure, monomer. Component of the ribosomal small subunit (SSU) processome.

It localises to the nucleus. It is found in the nucleolus. Its function is as follows. Required for 40S ribosome biogenesis. Involved in nucleolar processing of pre-18S ribosomal RNA and ribosome assembly. Binds to RNA. Required for female germline development, cell viability during eye development and for survival of dividing cells and epithelial cells during early wing disk development. The chain is KRR1 small subunit processome component homolog from Drosophila yakuba (Fruit fly).